Here is a 663-residue protein sequence, read N- to C-terminus: LEAF RUST 10 DISEASE-RESISTANCE LOCUS RECEPTOR-LIKE PROTEIN KINASE-like 1.4 (663 aa).

The first 25 residues, 1-25 (MYYPLSSSLMFFILFSLFYHLPCES), serve as a signal peptide directing secretion. Over 26–241 (SKCESLFQCG…TSLSIGAKAG (216 aa)) the chain is Extracellular. N-linked (GlcNAc...) asparagine glycans are attached at residues Asn36, Asn64, Asn106, Asn137, and Asn208. Residues 242–262 (IAVASVSGLAILLLAGLFLCI) form a helical membrane-spanning segment. Residues 263 to 663 (RRRRKTQDAQ…TSSSDTAASL (401 aa)) are Cytoplasmic-facing. The segment at 282–304 (SYSSRDTSRNPTSTTISSSSNHS) is disordered. Positions 290–304 (RNPTSTTISSSSNHS) are enriched in low complexity. In terms of domain architecture, Protein kinase spans 334–609 (ENFSRELGDG…DEIVEILRGI (276 aa)). Residues 340 to 348 (LGDGGFGTV) and Lys362 each bind ATP. The active-site Proton acceptor is the Asp458. The disordered stretch occupies residues 637–663 (LLRNSVPPPISPETDKWTSSSDTAASL). Over residues 653 to 663 (WTSSSDTAASL) the composition is skewed to polar residues.

This sequence belongs to the protein kinase superfamily. Ser/Thr protein kinase family.

It localises to the cell membrane. The enzyme catalyses L-seryl-[protein] + ATP = O-phospho-L-seryl-[protein] + ADP + H(+). The catalysed reaction is L-threonyl-[protein] + ATP = O-phospho-L-threonyl-[protein] + ADP + H(+). The sequence is that of LEAF RUST 10 DISEASE-RESISTANCE LOCUS RECEPTOR-LIKE PROTEIN KINASE-like 1.4 from Arabidopsis thaliana (Mouse-ear cress).